The sequence spans 436 residues: tRNA(Ile)-lysidine synthase (436 aa).

Residue 21–26 (SGGVDS) participates in ATP binding.

It belongs to the tRNA(Ile)-lysidine synthase family.

It localises to the cytoplasm. It catalyses the reaction cytidine(34) in tRNA(Ile2) + L-lysine + ATP = lysidine(34) in tRNA(Ile2) + AMP + diphosphate + H(+). Its function is as follows. Ligates lysine onto the cytidine present at position 34 of the AUA codon-specific tRNA(Ile) that contains the anticodon CAU, in an ATP-dependent manner. Cytidine is converted to lysidine, thus changing the amino acid specificity of the tRNA from methionine to isoleucine. The polypeptide is tRNA(Ile)-lysidine synthase (Aster yellows witches'-broom phytoplasma (strain AYWB)).